Here is a 476-residue protein sequence, read N- to C-terminus: Elongation factor Tu, chloroplastic (476 aa).

The transit peptide at 1-67 (MAISAPAACS…QSTRRSFTVR (67 aa)) directs the protein to the chloroplast. The tr-type G domain maps to 77–281 (KPHVNIGTIG…AVDDYIPIPQ (205 aa)). Residues 86 to 93 (GHVDHGKT) form a G1 region. 86–93 (GHVDHGKT) is a GTP binding site. Position 94 is a phosphothreonine (Thr-94). The G2 stretch occupies residues 127-131 (GITIN). The interval 148–151 (DCPG) is G3. GTP contacts are provided by residues 148-152 (DCPGH) and 203-206 (NKED). The tract at residues 203-206 (NKED) is G4. The G5 stretch occupies residues 241–243 (SAL).

It belongs to the TRAFAC class translation factor GTPase superfamily. Classic translation factor GTPase family. EF-Tu/EF-1A subfamily. In terms of assembly, interacts with PI5K2. Interacts with APD2.

Its subcellular location is the plastid. It is found in the chloroplast. This protein promotes the GTP-dependent binding of aminoacyl-tRNA to the A-site of ribosomes during protein biosynthesis. The sequence is that of Elongation factor Tu, chloroplastic (TUFA) from Arabidopsis thaliana (Mouse-ear cress).